The primary structure comprises 92 residues: Small ribosomal subunit protein uS17 (92 aa).

It belongs to the universal ribosomal protein uS17 family. Part of the 30S ribosomal subunit.

In terms of biological role, one of the primary rRNA binding proteins, it binds specifically to the 5'-end of 16S ribosomal RNA. The chain is Small ribosomal subunit protein uS17 from Mycoplasma mobile (strain ATCC 43663 / 163K / NCTC 11711) (Mesomycoplasma mobile).